We begin with the raw amino-acid sequence, 284 residues long: Bifunctional protein FolD (284 aa).

NADP(+)-binding positions include 166 to 168 and Ile-232; that span reads GAS.

The protein belongs to the tetrahydrofolate dehydrogenase/cyclohydrolase family. As to quaternary structure, homodimer.

It catalyses the reaction (6R)-5,10-methylene-5,6,7,8-tetrahydrofolate + NADP(+) = (6R)-5,10-methenyltetrahydrofolate + NADPH. The enzyme catalyses (6R)-5,10-methenyltetrahydrofolate + H2O = (6R)-10-formyltetrahydrofolate + H(+). It functions in the pathway one-carbon metabolism; tetrahydrofolate interconversion. Catalyzes the oxidation of 5,10-methylenetetrahydrofolate to 5,10-methenyltetrahydrofolate and then the hydrolysis of 5,10-methenyltetrahydrofolate to 10-formyltetrahydrofolate. This is Bifunctional protein FolD from Stutzerimonas stutzeri (strain A1501) (Pseudomonas stutzeri).